A 323-amino-acid polypeptide reads, in one-letter code: Cyclin-H (323 aa).

Ser5 is modified (phosphoserine; by CDK8). Residue Ser132 is modified to Phosphoserine. The segment at 299–323 is disordered; sequence DDDYVPKKSKHEEEEWTDDDLVESL. Over residues 302 to 311 the composition is skewed to basic and acidic residues; that stretch reads YVPKKSKHEE. The segment covering 312-323 has biased composition (acidic residues); that stretch reads EEWTDDDLVESL. At Thr315 the chain carries Phosphothreonine. At Ser322 the chain carries Phosphoserine.

The protein belongs to the cyclin family. Cyclin C subfamily. As to quaternary structure, associates primarily with CDK7 and MAT1 to form the CAK complex. CAK can further associate with the core-TFIIH to form the TFIIH basal transcription factor.

It is found in the nucleus. Regulates CDK7, the catalytic subunit of the CDK-activating kinase (CAK) enzymatic complex. CAK activates the cyclin-associated kinases CDK1, CDK2, CDK4 and CDK6 by threonine phosphorylation. CAK complexed to the core-TFIIH basal transcription factor activates RNA polymerase II by serine phosphorylation of the repetitive C-terminal domain (CTD) of its large subunit (POLR2A), allowing its escape from the promoter and elongation of the transcripts. Involved in cell cycle control and in RNA transcription by RNA polymerase II. Its expression and activity are constant throughout the cell cycle. The protein is Cyclin-H (CCNH) of Macaca fascicularis (Crab-eating macaque).